A 423-amino-acid chain; its full sequence is Putative protein phosphatase 2C 50 (423 aa).

A PPM-type phosphatase domain is found at 52–380 (IFAFPFPTGT…DNMAAVVVPL (329 aa)). 4 residues coordinate Mn(2+): D74, G75, D320, and D371.

It belongs to the PP2C family. Requires Mg(2+) as cofactor. The cofactor is Mn(2+).

It catalyses the reaction O-phospho-L-seryl-[protein] + H2O = L-seryl-[protein] + phosphate. The catalysed reaction is O-phospho-L-threonyl-[protein] + H2O = L-threonyl-[protein] + phosphate. The protein is Putative protein phosphatase 2C 50 of Arabidopsis thaliana (Mouse-ear cress).